The chain runs to 193 residues: Ion-translocating oxidoreductase complex subunit A (193 aa).

Helical transmembrane passes span 4–24 (LLLI…RFLG), 39–59 (LGMG…TWVL), 72–92 (LQTI…EMIV), 102–122 (SLGI…LAVL), 134–154 (LVFA…FAGL), and 171–191 (PIEL…AGLV).

It belongs to the NqrDE/RnfAE family. As to quaternary structure, the complex is composed of six subunits: RnfA, RnfB, RnfC, RnfD, RnfE and RnfG.

Its subcellular location is the cell inner membrane. Its function is as follows. Part of a membrane-bound complex that couples electron transfer with translocation of ions across the membrane. This is Ion-translocating oxidoreductase complex subunit A from Syntrophotalea carbinolica (strain DSM 2380 / NBRC 103641 / GraBd1) (Pelobacter carbinolicus).